The sequence spans 543 residues: T-complex protein 1 subunit gamma (543 aa).

Belongs to the TCP-1 chaperonin family.

The protein localises to the cytoplasm. Its function is as follows. Molecular chaperone; assists the folding of proteins upon ATP hydrolysis. Known to play a role, in vitro, in the folding of actin and tubulin. Plays a role in microtubule polymerization. The polypeptide is T-complex protein 1 subunit gamma (Caenorhabditis elegans).